The following is a 599-amino-acid chain: Putative sensor histidine kinase NtrY-like (599 aa).

Helical transmembrane passes span 17-37 (ILIL…FYVI), 44-64 (FSTI…LGIL), 85-105 (IVIA…VFSV), and 285-305 (IMFI…GVLF). Residues 307–361 (AQIVKPIKKLVTATDKVKDGDLTVQVPENEVDKDEIGTLYVAFNRMIKQLSRQQR) form the HAMP domain. One can recognise a Histidine kinase domain in the interval 378–589 (KVAHEIKNPL…IIDIKFDLKE (212 aa)). Position 381 is a phosphohistidine; by autocatalysis (His381).

The protein localises to the cell membrane. The catalysed reaction is ATP + protein L-histidine = ADP + protein N-phospho-L-histidine.. Its function is as follows. Member of the two-component regulatory system RT0603/RT0550. The sequence is that of Putative sensor histidine kinase NtrY-like from Rickettsia typhi (strain ATCC VR-144 / Wilmington).